We begin with the raw amino-acid sequence, 2412 residues long: Genome polyprotein 1 (2412 aa).

Residues 1 to 23 (MEQTLAQAVSRRGKTNTPMAEER) are disordered. In terms of domain architecture, Helicase ATP-binding spans 474-632 (AMADANNCWS…AARKYPLHVE (159 aa)). 487–494 (GHTGSGKS) contacts ATP. The 167-residue stretch at 647-813 (GGGDLLDISK…NVPFYMNETF (167 aa)) folds into the Helicase C-terminal domain. O-(5'-phospho-RNA)-tyrosine is present on Tyr-1234. The region spanning 1359-1574 (ISFGASTGIL…CGYSSHNALF (216 aa)) is the Peptidase C4 domain. Catalysis depends on for nuclear inclusion protein A activity residues His-1404, Asp-1440, and Cys-1507. Residues 1858 to 1982 (WLHGSGDGSR…AISPQFDEEF (125 aa)) enclose the RdRp catalytic domain. The interval 2178–2202 (PTEDDGKLKTPSGARIPSSAADGNW) is disordered.

This sequence belongs to the bymoviruses polyprotein 1 family. Post-translationally, VPg is uridylylated by the polymerase and is covalently attached to the 5'-end of the genomic RNA. This uridylylated form acts as a nucleotide-peptide primer for the polymerase. In terms of processing, the viral RNA1 of bymoviruses is expressed as a single polyprotein which undergoes post-translational proteolytic processing by the main proteinase NIa-pro resulting in the production of at least eight individual proteins.

The protein localises to the host cytoplasmic vesicle. Its subcellular location is the virion. The enzyme catalyses RNA(n) + a ribonucleoside 5'-triphosphate = RNA(n+1) + diphosphate. It carries out the reaction Hydrolyzes glutaminyl bonds, and activity is further restricted by preferences for the amino acids in P6 - P1' that vary with the species of potyvirus, e.g. Glu-Xaa-Xaa-Tyr-Xaa-Gln-|-(Ser or Gly) for the enzyme from tobacco etch virus. The natural substrate is the viral polyprotein, but other proteins and oligopeptides containing the appropriate consensus sequence are also cleaved.. Its function is as follows. Indispensable for virus replication. In terms of biological role, mediates the cap-independent, EIF4E-dependent translation of viral genomic RNAs. Binds to the cap-binding site of host EIF4E and thus interferes with the host EIF4E-dependent mRNA export and translation. VPg-RNA directly binds EIF4E and is a template for transcription. Also forms trimeric complexes with EIF4E-EIF4G, which are templates for translation. Has RNA-binding and proteolytic activities. Functionally, an RNA-dependent RNA polymerase that plays an essential role in the virus replication. The chain is Genome polyprotein 1 from Hordeum vulgare (Barley).